A 499-amino-acid polypeptide reads, in one-letter code: ATP synthase subunit alpha, chloroplastic (499 aa).

ATP is bound at residue 170 to 177; that stretch reads GDRQTGKT.

Belongs to the ATPase alpha/beta chains family. In terms of assembly, F-type ATPases have 2 components, CF(1) - the catalytic core - and CF(0) - the membrane proton channel. CF(1) has five subunits: alpha(3), beta(3), gamma(1), delta(1), epsilon(1). CF(0) has four main subunits: a, b, b' and c.

The protein resides in the plastid. It localises to the chloroplast thylakoid membrane. The enzyme catalyses ATP + H2O + 4 H(+)(in) = ADP + phosphate + 5 H(+)(out). Its function is as follows. Produces ATP from ADP in the presence of a proton gradient across the membrane. The alpha chain is a regulatory subunit. This is ATP synthase subunit alpha, chloroplastic from Emiliania huxleyi (Coccolithophore).